A 476-amino-acid chain; its full sequence is POC1 centriolar protein homolog B (476 aa).

7 WD repeats span residues 16 to 55 (GHKAAITSADFSPNCKQIATASWDTFLMLWSLKPHARAYR), 58 to 97 (GHKDVVTSLQFSPQGNLLASASRDRTVRLWVLDRKGKSSE), 100 to 139 (AHTAPVRSVDFSADGQLLVTASEDKSIKVWSMFRQRFLYS), 142 to 181 (RHTHWVRCAKFSPDGRLIVSCSEDKTIKIWDTTNKQCVNN), 183 to 223 (SDSV…LLQH), 226 to 265 (VHSCGVNCLSFHPLGNSLVTASSDGTVKMLDLIEGRLIYT), and 268 to 307 (GHTGPVFTVSFSKDGELLTSGGADAQVLIWRTNFIHLHCK). Residues 429 to 468 (ALEHIMEQLNILTQTVSILEQRLSLTEDKLRDCLENQQKL) adopt a coiled-coil conformation.

The protein belongs to the WD repeat POC1 family. As to quaternary structure, interacts with POC1A. Interacts with FAM161A. Interacts with CEP44; the interaction is direct and recruits POC1B to centriolar microtubules. Forms a microtubule-associated complex with POC5, CETN2 and FAM161A. Interacts with CCDC15. In terms of processing, phosphorylated in mitotic cells that may be mediated by CDK1. Expressed in the retina.

Its subcellular location is the cytoplasm. It is found in the cytoskeleton. The protein resides in the microtubule organizing center. The protein localises to the centrosome. It localises to the centriole. Its subcellular location is the cilium basal body. It is found in the spindle pole. Functionally, plays an important role in centriole assembly and/or stability and ciliogenesis. Involved in early steps of centriole duplication, as well as in the later steps of centriole length control. Acts in concert with POC1A to ensure centriole integrity and proper mitotic spindle formation. Required for primary cilia formation, ciliary length and also cell proliferation. Required for retinal integrity. Acts as a positive regulator of centriole elongation. This chain is POC1 centriolar protein homolog B (Poc1b), found in Mus musculus (Mouse).